We begin with the raw amino-acid sequence, 160 residues long: MRIGHGYDVHKFGGEGPIIIGGVRIPYEQGLLAHSDGDVVLHAVTDAILGAVAMGDIGTLFPDTDPAYKGADSRVLLREAFSRVMAKGYRIGNLDVTIIAQAPKMLPHTPQMRVNIAEDLHCHVDDINVKATTTEKLGFVGRKEGIACEAVVLLIKESLS.

A divalent metal cation is bound by residues Asp-8 and His-10. 4-CDP-2-C-methyl-D-erythritol 2-phosphate is bound by residues 8 to 10 (DVH) and 34 to 35 (HS). His-42 serves as a coordination point for a divalent metal cation. Residues 56-58 (DIG), 61-65 (FPDTD), 100-106 (AQAPKML), 132-135 (TTTE), Phe-139, and Arg-142 each bind 4-CDP-2-C-methyl-D-erythritol 2-phosphate.

Belongs to the IspF family. In terms of assembly, homotrimer. It depends on a divalent metal cation as a cofactor.

The catalysed reaction is 4-CDP-2-C-methyl-D-erythritol 2-phosphate = 2-C-methyl-D-erythritol 2,4-cyclic diphosphate + CMP. Its pathway is isoprenoid biosynthesis; isopentenyl diphosphate biosynthesis via DXP pathway; isopentenyl diphosphate from 1-deoxy-D-xylulose 5-phosphate: step 4/6. Its function is as follows. Involved in the biosynthesis of isopentenyl diphosphate (IPP) and dimethylallyl diphosphate (DMAPP), two major building blocks of isoprenoid compounds. Catalyzes the conversion of 4-diphosphocytidyl-2-C-methyl-D-erythritol 2-phosphate (CDP-ME2P) to 2-C-methyl-D-erythritol 2,4-cyclodiphosphate (ME-CPP) with a corresponding release of cytidine 5-monophosphate (CMP). The chain is 2-C-methyl-D-erythritol 2,4-cyclodiphosphate synthase from Proteus mirabilis (strain HI4320).